Here is a 226-residue protein sequence, read N- to C-terminus: Cytidylate kinase (226 aa).

12-20 (GPSGAGKGT) contributes to the ATP binding site.

This sequence belongs to the cytidylate kinase family. Type 1 subfamily.

The protein localises to the cytoplasm. The enzyme catalyses CMP + ATP = CDP + ADP. It carries out the reaction dCMP + ATP = dCDP + ADP. This chain is Cytidylate kinase, found in Vibrio vulnificus (strain CMCP6).